The following is an 80-amino-acid chain: Defensin-like protein 50 (80 aa).

An N-terminal signal peptide occupies residues 1–27 (MGFTKIVVTFFLVVMLAVSSSSQNAMA). 4 cysteine pairs are disulfide-bonded: C39/C79, C43/C66, C52/C77, and C56/C78.

This sequence belongs to the DEFL family.

The protein resides in the secreted. This is Defensin-like protein 50 (LCR49) from Arabidopsis thaliana (Mouse-ear cress).